Consider the following 100-residue polypeptide: UPF0213 protein FN1575 (100 aa).

A GIY-YIG domain is found at 1 to 77 (MAYYLYMLRC…KYIKKKKENI (77 aa)).

It belongs to the UPF0213 family.

This chain is UPF0213 protein FN1575, found in Fusobacterium nucleatum subsp. nucleatum (strain ATCC 25586 / DSM 15643 / BCRC 10681 / CIP 101130 / JCM 8532 / KCTC 2640 / LMG 13131 / VPI 4355).